The primary structure comprises 326 residues: MSILPVIFLSIFFYSSFVQTFNAPECIDKGQYFASFMELENEPVILPCPQINTLSSGYNILDILWEKRGADNDRIIPIDNGSNMLILNPTQSDSGIYICITTNETYCDMMSLNLTIVSVSESNIDLISYPQIVNERSTGEMVCPNINAFIASNVNADIIWSGHRRLRNKRLKQRTPGIITIEDVRKNDAGYYTCVLEYIYGGKTYNVTRIVKLEVRDKIIPSTMQLPDGIVTSIGSNLTIACRVSLRPPTTDADVFWISNGMYYEEDDGDGNGRISVANKIYMTDKRRVITSRLNINPVKEEDATTFTCMAFTIPSISKTVTVSIT.

The first 18 residues, 1–18, serve as a signal peptide directing secretion; sequence MSILPVIFLSIFFYSSFV. Ig-like domains lie at 24-115, 122-212, and 221-322; these read PECI…LNLT, SNID…RIVK, and PSTM…KTVT. The cysteines at positions 48 and 99 are disulfide-linked. Residues Asn-80, Asn-103, and Asn-113 are each glycosylated (N-linked (GlcNAc...) asparagine; by host). Cys-143 and Cys-194 are disulfide-bonded. Residues Asn-206 and Asn-237 are each glycosylated (N-linked (GlcNAc...) asparagine; by host). An intrachain disulfide couples Cys-242 to Cys-309.

This sequence belongs to the interleukin-1 receptor family. As to quaternary structure, interacts with mouse Il1b.

The protein resides in the secreted. Its function is as follows. May reduce the host inflammatory response by interacting with inteleukin-1 beta (Il1b) and thus decreasing the association between IL1B and its cellular receptor. This chain is Interleukin-1-binding protein (OPG201), found in Vaccinia virus (strain Western Reserve) (VACV).